Reading from the N-terminus, the 393-residue chain is Reticulon-like protein 2 (393 aa).

Residues 1-21 (MNRNTTTNKNANLNNSRNANA) show a composition bias toward low complexity. The disordered stretch occupies residues 1–25 (MNRNTTTNKNANLNNSRNANAPGEA). Residues 1-60 (MNRNTTTNKNANLNNSRNANAPGEAGHQNKTGLIYWTNPSKSGASFAATLVSLLILRNVN) lie on the Cytoplasmic side of the membrane. Residues 30 to 236 (KTGLIYWTNP…SISNENKSST (207 aa)) enclose the Reticulon domain. Residues 61 to 81 (VISVLLKIGYMVLFTSFAVEL) traverse the membrane as a helical segment. Residues 82-149 (STKVLFDKGV…IGVSLYFLHG (68 aa)) are Lumenal-facing. N-linked (GlcNAc...) asparagine glycosylation occurs at Asn137. A helical transmembrane segment spans residues 150–170 (LFAIFSMNTVLIMTTIFLYTV). At 171–393 (PLIYDRKQAR…HGLKQKLQHA (223 aa)) the chain is on the cytoplasmic side. 2 disordered regions span residues 214–313 (IIPP…DVKT) and 339–393 (GDYN…LQHA). Positions 220-285 (DEGSYSTSIS…PVSQNENIGT (66 aa)) are enriched in polar residues. Ser278 carries the post-translational modification Phosphoserine. A compositionally biased stretch (basic and acidic residues) spans 289 to 313 (GKQEIPTEKDFNNRHENFSKPDVKT). Polar residues predominate over residues 365–376 (PAESQSIPIKNN). The span at 381-393 (KTTHGLKQKLQHA) shows a compositional bias: basic residues.

It localises to the endoplasmic reticulum membrane. The sequence is that of Reticulon-like protein 2 (RTN2) from Saccharomyces cerevisiae (strain ATCC 204508 / S288c) (Baker's yeast).